The sequence spans 315 residues: Glycine--tRNA ligase alpha subunit (315 aa).

Belongs to the class-II aminoacyl-tRNA synthetase family. As to quaternary structure, tetramer of two alpha and two beta subunits.

Its subcellular location is the cytoplasm. The enzyme catalyses tRNA(Gly) + glycine + ATP = glycyl-tRNA(Gly) + AMP + diphosphate. The protein is Glycine--tRNA ligase alpha subunit of Ectopseudomonas mendocina (strain ymp) (Pseudomonas mendocina).